The chain runs to 220 residues: Putative vesicle-associated membrane protein 726 (220 aa).

The Cytoplasmic segment spans residues 1–196 (MGQQSLIYSF…LWFENMKIKL (196 aa)). The 105-residue stretch at 10 to 114 (FVARGTVILA…SLNKEFGSKL (105 aa)) folds into the Longin domain. The region spanning 130 to 190 (KLSKVKAQVT…TKMKRKLWFE (61 aa)) is the v-SNARE coiled-coil homology domain. A helical; Anchor for type IV membrane protein membrane pass occupies residues 197 to 217 (IVFGIIVALILIIILSVCHGF). The Vesicular portion of the chain corresponds to 218–220 (KCT).

It belongs to the synaptobrevin family. Expressed in flowers, leaves, stems and roots.

It localises to the cell membrane. Its subcellular location is the early endosome membrane. Functionally, involved in the targeting and/or fusion of transport vesicles to their target membrane. This chain is Putative vesicle-associated membrane protein 726 (VAMP726), found in Arabidopsis thaliana (Mouse-ear cress).